Consider the following 316-residue polypeptide: protein SLOW GREEN 1, chloroplastic (316 aa).

The transit peptide at 1-39 (MISSLSASSSLVSSFVAVKATPVTGPLIPRRDLLSIRIR) directs the protein to the chloroplast. TPR repeat units follow at residues 118–151 (VETL…QPEE), 152–185 (TEWK…NPLS), 226–259 (RDVR…DPKD), and 261–293 (RPYF…SPKK).

Ubiquitous. Preferentially expressed in newly formed green tissues.

Its subcellular location is the plastid. It is found in the chloroplast. Required for the early stage of chloroplast development. May be involved in chloroplast protein biosynthesis and/or degradation. The protein is protein SLOW GREEN 1, chloroplastic of Arabidopsis thaliana (Mouse-ear cress).